Consider the following 465-residue polypeptide: ATP synthase subunit beta (465 aa).

152-159 contacts ATP; sequence GGAGVGKT.

Belongs to the ATPase alpha/beta chains family. In terms of assembly, F-type ATPases have 2 components, CF(1) - the catalytic core - and CF(0) - the membrane proton channel. CF(1) has five subunits: alpha(3), beta(3), gamma(1), delta(1), epsilon(1). CF(0) has three main subunits: a(1), b(2) and c(9-12). The alpha and beta chains form an alternating ring which encloses part of the gamma chain. CF(1) is attached to CF(0) by a central stalk formed by the gamma and epsilon chains, while a peripheral stalk is formed by the delta and b chains.

It localises to the cell inner membrane. It catalyses the reaction ATP + H2O + 4 H(+)(in) = ADP + phosphate + 5 H(+)(out). Produces ATP from ADP in the presence of a proton gradient across the membrane. The catalytic sites are hosted primarily by the beta subunits. In Campylobacter hominis (strain ATCC BAA-381 / DSM 21671 / CCUG 45161 / LMG 19568 / NCTC 13146 / CH001A), this protein is ATP synthase subunit beta.